The chain runs to 432 residues: Adenylosuccinate synthetase 1 (432 aa).

GTP-binding positions include Gly-12–Arg-18 and Gly-40–Thr-42. The active-site Proton acceptor is the Asp-13. Residues Asp-13 and Gly-40 each contribute to the Mg(2+) site. Residues Asp-13–Lys-16, Asn-38–His-41, Thr-128, Arg-142, Gln-222, Thr-237, and Arg-301 contribute to the IMP site. The active-site Proton donor is the His-41. Thr-297–Arg-303 is a binding site for substrate. GTP-binding positions include Arg-303, Lys-329–Asp-331, and Ser-411–Gly-413.

This sequence belongs to the adenylosuccinate synthetase family. As to quaternary structure, homodimer. It depends on Mg(2+) as a cofactor.

It localises to the cytoplasm. The enzyme catalyses IMP + L-aspartate + GTP = N(6)-(1,2-dicarboxyethyl)-AMP + GDP + phosphate + 2 H(+). The protein operates within purine metabolism; AMP biosynthesis via de novo pathway; AMP from IMP: step 1/2. Functionally, plays an important role in the de novo pathway of purine nucleotide biosynthesis. Catalyzes the first committed step in the biosynthesis of AMP from IMP. The protein is Adenylosuccinate synthetase 1 of Chromobacterium violaceum (strain ATCC 12472 / DSM 30191 / JCM 1249 / CCUG 213 / NBRC 12614 / NCIMB 9131 / NCTC 9757 / MK).